A 268-amino-acid polypeptide reads, in one-letter code: ClpXP adapter protein SpxH (268 aa).

It belongs to the SpxH family. As to quaternary structure, interacts with Spx.

Its subcellular location is the cytoplasm. Adapter protein required for efficient degradation of Spx by ClpXP under non-stress conditions. Interaction with Spx stabilizes Spx and exposes the C-terminus of Spx for recognition and proteolysis by ClpXP. In Staphylococcus aureus (strain COL), this protein is ClpXP adapter protein SpxH.